The sequence spans 132 residues: Ribosome-binding factor A (132 aa).

It belongs to the RbfA family. Monomer. Binds 30S ribosomal subunits, but not 50S ribosomal subunits or 70S ribosomes.

Its subcellular location is the cytoplasm. One of several proteins that assist in the late maturation steps of the functional core of the 30S ribosomal subunit. Associates with free 30S ribosomal subunits (but not with 30S subunits that are part of 70S ribosomes or polysomes). Required for efficient processing of 16S rRNA. May interact with the 5'-terminal helix region of 16S rRNA. In Teredinibacter turnerae (strain ATCC 39867 / T7901), this protein is Ribosome-binding factor A.